The primary structure comprises 632 residues: Phosphomethylpyrimidine synthase (632 aa).

Substrate contacts are provided by residues asparagine 237, methionine 266, tyrosine 295, histidine 331, 351-353, 392-395, and glutamate 431; these read SRG and DGLR. Histidine 435 is a Zn(2+) binding site. Tyrosine 458 contributes to the substrate binding site. Histidine 499 provides a ligand contact to Zn(2+). Residues cysteine 579, cysteine 582, and cysteine 587 each contribute to the [4Fe-4S] cluster site.

It belongs to the ThiC family. As to quaternary structure, homodimer. The cofactor is [4Fe-4S] cluster.

It carries out the reaction 5-amino-1-(5-phospho-beta-D-ribosyl)imidazole + S-adenosyl-L-methionine = 4-amino-2-methyl-5-(phosphooxymethyl)pyrimidine + CO + 5'-deoxyadenosine + formate + L-methionine + 3 H(+). It functions in the pathway cofactor biosynthesis; thiamine diphosphate biosynthesis. Its function is as follows. Catalyzes the synthesis of the hydroxymethylpyrimidine phosphate (HMP-P) moiety of thiamine from aminoimidazole ribotide (AIR) in a radical S-adenosyl-L-methionine (SAM)-dependent reaction. The protein is Phosphomethylpyrimidine synthase of Chromobacterium violaceum (strain ATCC 12472 / DSM 30191 / JCM 1249 / CCUG 213 / NBRC 12614 / NCIMB 9131 / NCTC 9757 / MK).